The following is a 1303-amino-acid chain: Zinc finger CCCH domain-containing protein 4 (1303 aa).

A compositionally biased stretch (pro residues) spans 1-33; the sequence is MEAAPGTPPPPPSESPPPPSPPPPSTPSPPPCS. The segment at 1-388 is disordered; it reads MEAAPGTPPP…RDHDKPHQQS (388 aa). The span at 53-73 shows a compositional bias: acidic residues; that stretch reads DREDGELEEGELEDDGAEETQ. Phosphothreonine is present on residues T72 and T75. S76, S92, and S94 each carry phosphoserine. Basic and acidic residues predominate over residues 80 to 99; it reads ERSRKEKGEKHHSDSDEEKS. A coiled-coil region spans residues 95–128; it reads DEEKSHRRLKRKRKKEREKEKRRSKKRRKSKHKR. Positions 100-130 are enriched in basic residues; sequence HRRLKRKRKKEREKEKRRSKKRRKSKHKRHA. The span at 135–144 shows a compositional bias: acidic residues; that stretch reads DFSDFSDDSD. Y155 carries the post-translational modification Phosphotyrosine. A compositionally biased stretch (acidic residues) spans 194–218; it reads EDYENEQYGEYEGDEEEDMGKEDYD. Residues 219–235 are compositionally biased toward basic and acidic residues; the sequence is DFTKELNQYRRAKEGSS. Basic residues predominate over residues 238–251; that stretch reads RGSRGRGRGYRGRG. Over residues 252–274 the composition is skewed to gly residues; sequence SRGGSRGRGMGRGSRGRGRGSMG. The span at 278 to 304 shows a compositional bias: acidic residues; sequence PEDEEDFYEEEMDYGESEEPMGDDDYD. Residues 305 to 321 are compositionally biased toward basic and acidic residues; sequence EYSKELNQYRRSKDSRG. Residues 323-346 are compositionally biased toward basic residues; the sequence is GLSRGRGRGSRGRGKGMGRGRGRG. A compositionally biased stretch (acidic residues) spans 358-369; that stretch reads NDDEDFYDEDMG. Over residues 377-388 the composition is skewed to basic and acidic residues; the sequence is RSRDHDKPHQQS. 3 C3H1-type zinc fingers span residues 390-417, 419-446, and 447-470; these read KKGKVICKYFVEGRCTWGDHCNFSHDIE, PKKRELCKFYITGFCARAENCPYMHGDF, and PCKLYHTTGNCINGDDCMFSHDPL. The span at 486–496 shows a compositional bias: acidic residues; that stretch reads AEAGAEDEKEV. A disordered region spans residues 486 to 571; it reads AEAGAEDEKE…HEPLSPQQLQ (86 aa). Pro residues-rich tracts occupy residues 507-529 and 539-558; these read LPKPPPGVGLLPTPPRPPGPQAP and GGPPPPPPPPPPPPGPPQMP. R601 carries the asymmetric dimethylarginine modification. A compositionally biased stretch (pro residues) spans 605–624; sequence PGGPPGPMGPGPNMGPPGPM. Disordered regions lie at residues 605-685, 710-955, and 996-1288; these read PGGP…SGMM, GLLG…PRSQ, and PPVP…ASLK. The span at 630–650 shows a compositional bias: basic and acidic residues; the sequence is PDMHPDMHPDMHPDMHADMHA. Residues 659–673 are compositionally biased toward pro residues; that stretch reads NPGPPMGPGGPPMMP. Basic and acidic residues-rich tracts occupy residues 717–739 and 782–795; these read DYGHYEELPGEPGEHLFPEHPLE and ERARRLAESSKQDR. Residues 767–800 adopt a coiled-coil conformation; that stretch reads RALYLRIQQKQQEEEERARRLAESSKQDRENEEG. 2 positions are modified to phosphoserine: S807 and S808. A compositionally biased stretch (polar residues) spans 815-843; sequence SSVTSILKTLRQQTSSRPPASVGELSSSG. Residues 860–875 are compositionally biased toward basic and acidic residues; it reads ADPRLSRDPRLTRHVE. 3 positions are modified to phosphoserine: S904, S907, and S908. The span at 904–918 shows a compositional bias: low complexity; the sequence is SLHSSPVGPSSSKGS. 2 stretches are compositionally biased toward polar residues: residues 1028-1038 and 1053-1062; these read GASTDSSTQGA and VNATGSSAAP. A compositionally biased stretch (basic and acidic residues) spans 1067-1084; the sequence is KPSDPRVRKAPTDPRLQK. Residues 1097-1110 are compositionally biased toward low complexity; it reads PGPAEAPSPTASPS. S1104 bears the Phosphoserine mark. The residue at position 1106 (T1106) is a Phosphothreonine. S1108, S1110, and S1114 each carry phosphoserine. The residue at position 1118 (T1118) is a Phosphothreonine. The span at 1129–1139 shows a compositional bias: gly residues; that stretch reads GGLGQGGGGGQ. Residues 1224–1234 are compositionally biased toward low complexity; sequence KAAAAPAATTA. Over residues 1235–1245 the composition is skewed to pro residues; it reads TPPPEGAPPQP. The segment covering 1259–1268 has biased composition (polar residues); that stretch reads VKQTPKTGSG. 2 positions are modified to phosphoserine: S1269 and S1275.

It belongs to the suppressor of sable family. In terms of assembly, interacts with WDR82.

It localises to the chromosome. Its function is as follows. RNA-binding protein that suppresses transcription of long non-coding RNAs (lncRNAs). LncRNAs are defined as transcripts more than 200 nucleotides that are not translated into protein. Together with WDR82, part of a transcription termination checkpoint that promotes transcription termination of lncRNAs and their subsequent degradation by the exosome. The transcription termination checkpoint is activated by the inefficiently spliced first exon of lncRNAs. This chain is Zinc finger CCCH domain-containing protein 4, found in Homo sapiens (Human).